A 144-amino-acid chain; its full sequence is Macromomycin (144 aa).

The first 32 residues, 1-32, serve as a signal peptide directing secretion; sequence MLQNTSRFLARAGATVGVAAGLAFSLPADRDG. 2 cysteine pairs are disulfide-bonded: cysteine 68–cysteine 78 and cysteine 120–cysteine 125.

It belongs to the neocarzinostatin family.

Functionally, binds non-covalently to a chromophore which is the cytotoxic and mutagenic component of the antibiotic. The chromophore binds to DNA as a weak intercalator and causes single- and double-strand breaks. This chain is Macromomycin, found in Streptomyces macromomyceticus.